The sequence spans 179 residues: Large ribosomal subunit protein uL6 (179 aa).

This sequence belongs to the universal ribosomal protein uL6 family. As to quaternary structure, part of the 50S ribosomal subunit.

This protein binds to the 23S rRNA, and is important in its secondary structure. It is located near the subunit interface in the base of the L7/L12 stalk, and near the tRNA binding site of the peptidyltransferase center. The protein is Large ribosomal subunit protein uL6 of Mycoplasmopsis pulmonis (strain UAB CTIP) (Mycoplasma pulmonis).